The following is a 338-amino-acid chain: D-erythrose-4-phosphate dehydrogenase (338 aa).

Position 11–12 (11–12 (RI)) interacts with NAD(+). Residues 153–155 (SCT), Arg-199, 212–213 (TK), and Arg-235 each bind substrate. The active-site Nucleophile is Cys-154. Residue Asn-317 coordinates NAD(+).

The protein belongs to the glyceraldehyde-3-phosphate dehydrogenase family. Epd subfamily. In terms of assembly, homotetramer.

Its subcellular location is the cytoplasm. The catalysed reaction is D-erythrose 4-phosphate + NAD(+) + H2O = 4-phospho-D-erythronate + NADH + 2 H(+). It functions in the pathway cofactor biosynthesis; pyridoxine 5'-phosphate biosynthesis; pyridoxine 5'-phosphate from D-erythrose 4-phosphate: step 1/5. Functionally, catalyzes the NAD-dependent conversion of D-erythrose 4-phosphate to 4-phosphoerythronate. This Shewanella sp. (strain MR-4) protein is D-erythrose-4-phosphate dehydrogenase.